Here is a 472-residue protein sequence, read N- to C-terminus: Tryptophanase (472 aa).

At Lys-270 the chain carries N6-(pyridoxal phosphate)lysine.

It belongs to the beta-eliminating lyase family. Homotetramer. Requires pyridoxal 5'-phosphate as cofactor.

It carries out the reaction L-tryptophan + H2O = indole + pyruvate + NH4(+). Its pathway is amino-acid degradation; L-tryptophan degradation via pyruvate pathway; indole and pyruvate from L-tryptophan: step 1/1. The sequence is that of Tryptophanase (tnaA) from Haemophilus influenzae.